Here is a 252-residue protein sequence, read N- to C-terminus: 5'-nucleotidase SurE (252 aa).

The a divalent metal cation site is built by Asp8, Asp9, Ser39, and Asn96.

The protein belongs to the SurE nucleotidase family. The cofactor is a divalent metal cation.

Its subcellular location is the cytoplasm. The enzyme catalyses a ribonucleoside 5'-phosphate + H2O = a ribonucleoside + phosphate. Nucleotidase that shows phosphatase activity on nucleoside 5'-monophosphates. This Petrotoga mobilis (strain DSM 10674 / SJ95) protein is 5'-nucleotidase SurE.